Here is a 277-residue protein sequence, read N- to C-terminus: Urease accessory protein UreD (277 aa).

Belongs to the UreD family. In terms of assembly, ureD, UreF and UreG form a complex that acts as a GTP-hydrolysis-dependent molecular chaperone, activating the urease apoprotein by helping to assemble the nickel containing metallocenter of UreC. The UreE protein probably delivers the nickel.

The protein resides in the cytoplasm. Its function is as follows. Required for maturation of urease via the functional incorporation of the urease nickel metallocenter. This is Urease accessory protein UreD from Yersinia pestis bv. Antiqua (strain Antiqua).